The sequence spans 430 residues: Adenylosuccinate synthetase (430 aa).

Residues 12-18 (GDEGKGK) and 40-42 (GHT) each bind GTP. The active-site Proton acceptor is the aspartate 13. The Mg(2+) site is built by aspartate 13 and glycine 40. IMP contacts are provided by residues 13–16 (DEGK), 38–41 (NAGH), threonine 130, arginine 144, glutamine 224, threonine 239, and arginine 303. Histidine 41 (proton donor) is an active-site residue. A substrate-binding site is contributed by 299–305 (TNTGRPR). Residues arginine 305, 331-333 (KLD), and 413-415 (STS) contribute to the GTP site.

This sequence belongs to the adenylosuccinate synthetase family. Homodimer. Mg(2+) is required as a cofactor.

The protein resides in the cytoplasm. It catalyses the reaction IMP + L-aspartate + GTP = N(6)-(1,2-dicarboxyethyl)-AMP + GDP + phosphate + 2 H(+). It participates in purine metabolism; AMP biosynthesis via de novo pathway; AMP from IMP: step 1/2. Its function is as follows. Plays an important role in the de novo pathway of purine nucleotide biosynthesis. Catalyzes the first committed step in the biosynthesis of AMP from IMP. This Rhodopseudomonas palustris (strain BisB5) protein is Adenylosuccinate synthetase.